The sequence spans 172 residues: Lipoprotein signal peptidase (172 aa).

3 helical membrane passes run 10 to 30 (LIWLLLSALVVGLDQWSKAWV), 68 to 88 (WQLWFFTALAVGISGLLAFWL), and 98 to 118 (SALPYALVIGGAIGNVIDRLM). Residues Asp124 and Asp142 contribute to the active site. Residues 138–158 (FNIADSAIVGGAIGIAVFGLF) traverse the membrane as a helical segment.

The protein belongs to the peptidase A8 family.

The protein resides in the cell inner membrane. It catalyses the reaction Release of signal peptides from bacterial membrane prolipoproteins. Hydrolyzes -Xaa-Yaa-Zaa-|-(S,diacylglyceryl)Cys-, in which Xaa is hydrophobic (preferably Leu), and Yaa (Ala or Ser) and Zaa (Gly or Ala) have small, neutral side chains.. Its pathway is protein modification; lipoprotein biosynthesis (signal peptide cleavage). Its function is as follows. This protein specifically catalyzes the removal of signal peptides from prolipoproteins. The chain is Lipoprotein signal peptidase from Xanthomonas axonopodis pv. citri (strain 306).